Here is a 301-residue protein sequence, read N- to C-terminus: Glycine--tRNA ligase alpha subunit (301 aa).

Belongs to the class-II aminoacyl-tRNA synthetase family. As to quaternary structure, tetramer of two alpha and two beta subunits.

The protein localises to the cytoplasm. It carries out the reaction tRNA(Gly) + glycine + ATP = glycyl-tRNA(Gly) + AMP + diphosphate. The chain is Glycine--tRNA ligase alpha subunit from Shewanella denitrificans (strain OS217 / ATCC BAA-1090 / DSM 15013).